A 697-amino-acid chain; its full sequence is Potassium-transporting ATPase ATP-binding subunit (697 aa).

The next 4 membrane-spanning stretches (helical) occupy residues 55 to 75 (PIMFVVEIGFVITFILSFFPS), 79 to 99 (SIPGWFNITVSLILLFTVLFA), 245 to 265 (LTLIFLIVVVTLPIFTNYLGF), and 271 to 291 (VLVALLVCLIPTTIGGLLSAI). Asp-324 (4-aspartylphosphate intermediate) is an active-site residue. Residues Asp-361, Glu-365, 393–400 (FKAETRMS), and Lys-412 each bind ATP. Residues Asp-535 and Asp-539 each coordinate Mg(2+). 3 helical membrane-spanning segments follow: residues 605–625 (FAIIPAMFTLAIPQMEALNIM), 633–653 (AILSALLFNAVIIPLLIPLAM), and 677–697 (GGVIVPFIGIKVIDIIVGLFI).

It belongs to the cation transport ATPase (P-type) (TC 3.A.3) family. Type IA subfamily. The system is composed of three essential subunits: KdpA, KdpB and KdpC.

The protein resides in the cell membrane. It catalyses the reaction K(+)(out) + ATP + H2O = K(+)(in) + ADP + phosphate + H(+). Functionally, part of the high-affinity ATP-driven potassium transport (or Kdp) system, which catalyzes the hydrolysis of ATP coupled with the electrogenic transport of potassium into the cytoplasm. This subunit is responsible for energy coupling to the transport system and for the release of the potassium ions to the cytoplasm. This is Potassium-transporting ATPase ATP-binding subunit from Bacillus cereus (strain AH820).